We begin with the raw amino-acid sequence, 283 residues long: Pantothenate synthetase (283 aa).

Residue 26-33 (MGNLHEGH) participates in ATP binding. Residue H33 is the Proton donor of the active site. Position 57 (Q57) interacts with (R)-pantoate. Residue Q57 participates in beta-alanine binding. An ATP-binding site is contributed by 144-147 (GKKD). Q150 serves as a coordination point for (R)-pantoate. Residues I173 and 181–184 (LSSR) contribute to the ATP site.

This sequence belongs to the pantothenate synthetase family. Homodimer.

The protein resides in the cytoplasm. It catalyses the reaction (R)-pantoate + beta-alanine + ATP = (R)-pantothenate + AMP + diphosphate + H(+). The protein operates within cofactor biosynthesis; (R)-pantothenate biosynthesis; (R)-pantothenate from (R)-pantoate and beta-alanine: step 1/1. Functionally, catalyzes the condensation of pantoate with beta-alanine in an ATP-dependent reaction via a pantoyl-adenylate intermediate. This chain is Pantothenate synthetase, found in Polynucleobacter necessarius subsp. necessarius (strain STIR1).